The chain runs to 179 residues: Adenine phosphoribosyltransferase (179 aa).

Belongs to the purine/pyrimidine phosphoribosyltransferase family. In terms of assembly, homodimer.

It is found in the cytoplasm. It catalyses the reaction AMP + diphosphate = 5-phospho-alpha-D-ribose 1-diphosphate + adenine. It participates in purine metabolism; AMP biosynthesis via salvage pathway; AMP from adenine: step 1/1. Catalyzes a salvage reaction resulting in the formation of AMP, that is energically less costly than de novo synthesis. The protein is Adenine phosphoribosyltransferase of Histophilus somni (strain 129Pt) (Haemophilus somnus).